A 147-amino-acid polypeptide reads, in one-letter code: D-aminoacyl-tRNA deacylase (147 aa).

A Gly-cisPro motif, important for rejection of L-amino acids motif is present at residues 136 to 137 (GP).

This sequence belongs to the DTD family. Homodimer.

It localises to the cytoplasm. The enzyme catalyses glycyl-tRNA(Ala) + H2O = tRNA(Ala) + glycine + H(+). It carries out the reaction a D-aminoacyl-tRNA + H2O = a tRNA + a D-alpha-amino acid + H(+). In terms of biological role, an aminoacyl-tRNA editing enzyme that deacylates mischarged D-aminoacyl-tRNAs. Also deacylates mischarged glycyl-tRNA(Ala), protecting cells against glycine mischarging by AlaRS. Acts via tRNA-based rather than protein-based catalysis; rejects L-amino acids rather than detecting D-amino acids in the active site. By recycling D-aminoacyl-tRNA to D-amino acids and free tRNA molecules, this enzyme counteracts the toxicity associated with the formation of D-aminoacyl-tRNA entities in vivo and helps enforce protein L-homochirality. The polypeptide is D-aminoacyl-tRNA deacylase (Streptococcus pneumoniae (strain P1031)).